Here is a 92-residue protein sequence, read N- to C-terminus: Small ribosomal subunit protein uS19 (92 aa).

This sequence belongs to the universal ribosomal protein uS19 family.

Functionally, protein S19 forms a complex with S13 that binds strongly to the 16S ribosomal RNA. The protein is Small ribosomal subunit protein uS19 of Rickettsia bellii (strain OSU 85-389).